We begin with the raw amino-acid sequence, 182 residues long: Putative manganese efflux pump MntP (182 aa).

The next 6 membrane-spanning stretches (helical) occupy residues 6 to 26 (LIPLIIMAFALGMDAFSVSLG), 37 to 57 (ILYIGVTIGIFHIIMPFIGMV), 71 to 91 (HFAGAILLIGLGFYIVYSSIL), 101 to 121 (IGISLFVFAFGVSIDSFSVGL), 131 to 151 (VITILLFGFISMLLAWTGLFI), and 162 to 182 (YGEIVGGIILVGFGLYLLFPI).

Belongs to the MntP (TC 9.B.29) family.

It localises to the cell membrane. In terms of biological role, probably functions as a manganese efflux pump. The polypeptide is Putative manganese efflux pump MntP (Bacillus cereus (strain Q1)).